Consider the following 673-residue polypeptide: Potassium voltage-gated channel subfamily KQT member 1 (673 aa).

2 disordered regions span residues 1-28 (MAAA…RGSA) and 61-80 (GPSS…LGPR). The Cytoplasmic segment spans residues 1–118 (MAAATSPPRA…YNFLERPTGW (118 aa)). Ser-27 carries the post-translational modification Phosphoserine. The segment covering 66–75 (AAPAASPAAA) has biased composition (low complexity). The helical transmembrane segment at 119-140 (KCFVYHFAVFLIVLVCLIFSVL) threads the bilayer. The Extracellular segment spans residues 141–151 (STIEQYVALAT). Residues 152–174 (GTLFWMEIVLVVFFGTEYAVRLW) traverse the membrane as a helical segment. Residues 175–190 (SAGCRSKYVGIWGRLR) are Cytoplasmic-facing. Residues 191 to 216 (FARKPISIIDLIVVVASMVVLCVGSK) traverse the membrane as a helical segment. Residues 217–224 (GQVFATSA) are Extracellular-facing. The chain crosses the membrane as a helical; Voltage-sensor span at residues 225–240 (IRGIRFLQILRMLHVD). The interval 236-244 (MLHVDRQGG) is interaction with KCNE3. Topologically, residues 241 to 258 (RQGGTWRLLGSVVFIHRQ) are cytoplasmic. Gln-242 is a binding site for a 1,2-diacyl-sn-glycero-3-phospho-(1D-myo-inositol-4,5-bisphosphate). The chain crosses the membrane as a helical span at residues 259–281 (ELITTLYIGFLGLIFSSYFVYLA). At 282–297 (EKDAVNESGQVEFGSY) the chain is on the extracellular side. A glycan (N-linked (GlcNAc...) asparagine) is linked at Asn-287. Positions 298-318 (ADALWWGVVTVTTIGYGDKVP) form an intramembrane region, pore-forming. The Extracellular segment spans residues 319–320 (QT). A helical membrane pass occupies residues 321-346 (WVGKTIASCFSVFAISFFALPAGILG). Residues 347 to 673 (SGFALKVQQK…VPGRGPEEGS (327 aa)) lie on the Cytoplasmic side of the membrane. The segment at 368–380 (AAASLIQTAWRCY) is interaction with CALM. Residues Ser-405 and Ser-407 each carry the phosphoserine modification. The tract at residues 514 to 528 (KVIRRMQYFVAKKKF) is interaction with CALM; calcium-dependent. The interval 534-571 (PYDVRDVIEQYSQGHLNLMVRIKELQRRLDQSIGRPAL) is interaction with KCNE1 C-terminus. The interaction with AKAP9 stretch occupies residues 587–615 (IGARLNRVEDKVTQLDQRLELITDMLQQL). The segment at 588-619 (GARLNRVEDKVTQLDQRLELITDMLQQLLSLH) is C-terminal assembly domain (tetramerization). The segment at 619-673 (HRGGTPGSRAPGGGGAQVAQPCSGGSINPELFLPSNALPTYEQLTVPGRGPEEGS) is disordered. A compositionally biased stretch (gly residues) spans 622-634 (GTPGSRAPGGGGA).

The protein belongs to the potassium channel family. KQT (TC 1.A.1.15) subfamily. Kv7.1/KCNQ1 sub-subfamily. As to quaternary structure, tetramer. Heterotetramer with KCNE1; targets to the membrane raft. Interacts (via C-terminus) with CALM; forms a heterooctameric structure (with 4:4 KCNQ1:CALM stoichiometry) in a calcium-independent manner. Interacts with AKAP9; targets protein kinase A (PKA) catalytic and regulatory subunits and protein phosphatase 1 (PP1) to the KCNQ1-KCNE1 complex, allowing PKA-mediated phosphorylation and increase of delayed rectifier potassium channel activity. Interacts with KCNE2; form a heterooligomer complex that targets to the membrane raft and leading to currents with an apparently instantaneous activation, a rapid deactivation process and a linear current-voltage relationship and decreases the amplitude of the outward current. Interacts with AP2M1; mediates estrogen-induced internalization via clathrin-coated vesicles. Interacts with NEDD4L; promotes internalization and decreases I(Ks) currents. Interacts with USP2; counteracts the NEDD4L-specific down-regulation of I(Ks) and restore plasma membrane localization. Heterotetramer with KCNQ5; has a voltage-gated potassium channel activity. Interacts with KCNE3; four KCNE3 molecules are bound to one KCNQ1 tetramer (4:4 KCNQ1:KCNE3 stoichiometry); alters membrane raft localization; affects KCNQ1 structure and gating properties. Interacts with KCNE4; impairs KCNQ1 localization in lipid rafts and inhibits voltage-gated potassium channel activity. Interacts with KCNE5; impairs KCNQ1 localization in lipid rafts and only conducts current upon strong and continued depolarization. Interacts with SLC5A3; forms coregulatory channel-transporter complexes that modulate Na(+)-coupled myo-inositol influx through the transporter. In terms of processing, ubiquitinated by NEDD4L; promotes internalization. The ubiquitinylated form is internalized through a clathrin-mediated endocytosis by interacting with AP2M1 and is recycled back to the cell membrane via RAB4A and RAB11A. Deubiquitinated by USP2; counteracts the NEDD4L-specific down-regulation of I(Ks) and restores the membrane localization.

The protein localises to the cell membrane. It localises to the cytoplasmic vesicle membrane. The protein resides in the early endosome. Its subcellular location is the membrane raft. It is found in the endoplasmic reticulum. The protein localises to the basolateral cell membrane. It localises to the apical cell membrane. The enzyme catalyses K(+)(in) = K(+)(out). With respect to regulation, PIP2 molecule is essential to activate KCNQ channels by inducing the coupling of the voltage-sensing domain (VSD) and the pore-forming domain (PD). Upon channel activation, PIP2 disrupts the VSD-calmodulin/CALM interactions, causing the release of CALM from the VSD which triggers the opening of the gate. Calcium potentiates KCNQ1 channel current through calcium-bound CALM. Calcium-bound CALM competes with PIP2 to stabilize the channel open state. In terms of biological role, pore-forming subunit of the voltage-gated potassium (Kv) channel involved in the regulation of cardiomyocyte excitability and important in normal development and functions of myocardium, inner ear, stomach and colon. Associates with KCNE beta subunits that modulates current kinetics. Induces a voltage-dependent by rapidly activating and slowly deactivating potassium-selective outward current. Also promotes a delayed voltage activated potassium current showing outward rectification characteristic. During beta-adrenergic receptor stimulation participates in cardiac repolarization by associating with KCNE1 to form the I(Ks) cardiac potassium current that increases the amplitude and slows down the activation kinetics of outward potassium current I(Ks). Muscarinic agonist oxotremorine-M strongly suppresses KCNQ1/KCNE1 current. When associated with KCNE3, forms the potassium channel that is important for cyclic AMP-stimulated intestinal secretion of chloride ions. This interaction with KCNE3 is reduced by 17beta-estradiol, resulting in the reduction of currents. During conditions of increased substrate load, maintains the driving force for proximal tubular and intestinal sodium ions absorption, gastric acid secretion, and cAMP-induced jejunal chloride ions secretion. Allows the provision of potassium ions to the luminal membrane of the secretory canaliculus in the resting state as well as during stimulated acid secretion. When associated with KCNE2, forms a heterooligomer complex leading to currents with an apparently instantaneous activation, a rapid deactivation process and a linear current-voltage relationship and decreases the amplitude of the outward current. When associated with KCNE4, inhibits voltage-gated potassium channel activity. When associated with KCNE5, this complex only conducts current upon strong and continued depolarization. Also forms a heterotetramer with KCNQ5 that has a voltage-gated potassium channel activity. Binds with phosphatidylinositol 4,5-bisphosphate. KCNQ1-KCNE2 channel associates with Na(+)-coupled myo-inositol symporter in the apical membrane of choroid plexus epithelium and regulates the myo-inositol gradient between blood and cerebrospinal fluid with an impact on neuron excitability. The sequence is that of Potassium voltage-gated channel subfamily KQT member 1 from Sus scrofa (Pig).